The chain runs to 106 residues: UPF0145 protein CLL_A2504 (106 aa).

This sequence belongs to the UPF0145 family.

This chain is UPF0145 protein CLL_A2504, found in Clostridium botulinum (strain Eklund 17B / Type B).